The following is a 907-amino-acid chain: Protein translocase subunit SecA (907 aa).

ATP-binding positions include Q87, 105 to 109, and D512; that span reads GEGKT. Zn(2+) contacts are provided by C891, C893, C902, and H903.

Belongs to the SecA family. Monomer and homodimer. Part of the essential Sec protein translocation apparatus which comprises SecA, SecYEG and auxiliary proteins SecDF-YajC and YidC. Zn(2+) is required as a cofactor.

The protein localises to the cell inner membrane. Its subcellular location is the cytoplasm. It catalyses the reaction ATP + H2O + cellular proteinSide 1 = ADP + phosphate + cellular proteinSide 2.. Functionally, part of the Sec protein translocase complex. Interacts with the SecYEG preprotein conducting channel. Has a central role in coupling the hydrolysis of ATP to the transfer of proteins into and across the cell membrane, serving both as a receptor for the preprotein-SecB complex and as an ATP-driven molecular motor driving the stepwise translocation of polypeptide chains across the membrane. This chain is Protein translocase subunit SecA, found in Shewanella loihica (strain ATCC BAA-1088 / PV-4).